A 364-amino-acid polypeptide reads, in one-letter code: Histidinol-phosphate aminotransferase BQ2027_MB2256C (364 aa).

An N6-(pyridoxal phosphate)lysine modification is found at K220.

Belongs to the class-I pyridoxal-phosphate-dependent aminotransferase family. In terms of assembly, monomer. Pyridoxal 5'-phosphate serves as cofactor.

It is found in the secreted. Its subcellular location is the cell wall. The catalysed reaction is L-histidinol phosphate + 2-oxoglutarate = 3-(imidazol-4-yl)-2-oxopropyl phosphate + L-glutamate. Aminotransferase that catalyzes the conversion of histidinol phosphate and 2-oxoglutarate into L-glutamate and imidazole acetol phosphate. Might play a significant role in mediating histidine biosynthesis during infection. Facilitates mycobacterial survival and virulence in macrophages. The polypeptide is Histidinol-phosphate aminotransferase BQ2027_MB2256C (Mycobacterium bovis (strain ATCC BAA-935 / AF2122/97)).